A 407-amino-acid polypeptide reads, in one-letter code: O-methyltransferase verK (407 aa).

S-adenosyl-L-methionine is bound by residues Glu-263 and 295–297; that span reads GDF. The Proton acceptor role is filled by His-314.

Belongs to the class I-like SAM-binding methyltransferase superfamily. Cation-independent O-methyltransferase family.

The protein operates within mycotoxin biosynthesis. Its function is as follows. O-methyltransferase; part of the gene cluster that mediates the biosynthesis of 11'-deoxyverticillin A, one of the dimeric epipolythiodioxopiperazines (ETPs) from the verticillin family that act as mycotoxins. 11'-deoxyverticillin A is required for normal conidiation. The nonribosomal peptide synthetase verP is speculated to be responsible for condensation of amino acids to form the carbon skeleton of verticillin, whereas the cluster-specific tailoring enzymes are involved in further modifications leading to the production of 11'-deoxyverticillin A. The chain is O-methyltransferase verK from Clonostachys rogersoniana.